The chain runs to 761 residues: MIAVLQNPQNAAISYSGEPQEHNLLGSYETKAPNVETSEIAASSSSSEAPEDLAEEHHRNEASLQQPLSEVDRHEQPAASDNTRSGLDIPPVTVSTPQSSDNPLVESKEAVPVTFKDEGKGTKADPSHLLTEALETTNGEENSPISEDEATAIAVLKVIERYGVNFEKTGESWQGLTSFIPTVVEQVKKREAVRMILPAFPFKSPNARDKVLGVMPDLGEELALYHLNGLCENIGRVYEPGADVYISSDGLVYNDILGVPDETVWEYGEALRRMAVEKELHHVKFIRLFELLEHPWIPLTSAEQAKSYYLAHAQCLRRELMYRFEDRSFDADAAIRSDNDTCLTYRGYIKFLTKDLAPQMDTQYTSKKARAAHIAQIARSMIVRGKMFAAAIKANRADYVRLSIHESNGARKLSISLVPQVRGVLGYTPWHSSIAVDADGTLRAVHAEDVRETHELVYKNGQPYYFREKSKLFDWVEDGLRVKFEPLYPCGLIIRPSDIDDSRPPPSISHLPMHKVRQLSTGLSPVVLRGFRETLKEELYVQKASELGTILPWSFGIIQKVRDAGRTDKLGNNVTSNEAMPMHYDGMFKFEEETDPVTGEVKRVQKPPGYQFFTCPATAPKGSGYTLFASSRLFFRYLPLPWTTERLQKVTWGMDNDGFWDAKLKNLPLVVPHPVTGLPCMRWHQPWDSTKTKFSTCAVTIENDEQELASVVDDLTYDYRVCLRFSWEQGDLLVSDNTAMLHTRTGYKTNCERELWRIHFD.

A disordered region spans residues 24–128; sequence LLGSYETKAP…GKGTKADPSH (105 aa). Positions 36 to 48 are enriched in low complexity; it reads ETSEIAASSSSSE. Polar residues predominate over residues 93-102; that stretch reads TVSTPQSSDN. A compositionally biased stretch (basic and acidic residues) spans 115-126; sequence FKDEGKGTKADP.

This sequence belongs to the isocyanide synthase family.

The protein operates within secondary metabolite biosynthesis. Its function is as follows. Isocyanide synthase; part of the gene cluster that mediates the biosynthesis of the isocyanide xanthocillin and its derivatives. The first step of the pathway consists in the conversion of tyrosine into a vinyl-isonitrile intermediate by the isocyanide synthase xanB. Subsequent oxidative dimerization of this intermediate to form xanthocillin may involve the cytochrome P450 monooxygenase xanG, whose expression is coregulated with that of XanB. Xanthocillin can be further modified by the isonitrile hydratase-like protein xanA which introduces N-formyl groups and the methyltransferase xanE which introduces methyl groups, leading to the production of several derivatives including fumiformamide. Finally, fumiformamide can be subject to both oxidative and reductive cyclization to yield melanocins E and F, respectively. The chain is Isocyanide synthase xanB from Aspergillus fumigatus (strain ATCC MYA-4609 / CBS 101355 / FGSC A1100 / Af293) (Neosartorya fumigata).